The primary structure comprises 320 residues: Lipoyl synthase (320 aa).

[4Fe-4S] cluster is bound by residues cysteine 67, cysteine 72, cysteine 78, cysteine 93, cysteine 97, cysteine 100, and serine 307. A Radical SAM core domain is found at 79 to 296; the sequence is FNHGTATFMI…RTKAEVMGFE (218 aa).

This sequence belongs to the radical SAM superfamily. Lipoyl synthase family. [4Fe-4S] cluster serves as cofactor.

The protein localises to the cytoplasm. The catalysed reaction is [[Fe-S] cluster scaffold protein carrying a second [4Fe-4S](2+) cluster] + N(6)-octanoyl-L-lysyl-[protein] + 2 oxidized [2Fe-2S]-[ferredoxin] + 2 S-adenosyl-L-methionine + 4 H(+) = [[Fe-S] cluster scaffold protein] + N(6)-[(R)-dihydrolipoyl]-L-lysyl-[protein] + 4 Fe(3+) + 2 hydrogen sulfide + 2 5'-deoxyadenosine + 2 L-methionine + 2 reduced [2Fe-2S]-[ferredoxin]. It participates in protein modification; protein lipoylation via endogenous pathway; protein N(6)-(lipoyl)lysine from octanoyl-[acyl-carrier-protein]: step 2/2. In terms of biological role, catalyzes the radical-mediated insertion of two sulfur atoms into the C-6 and C-8 positions of the octanoyl moiety bound to the lipoyl domains of lipoate-dependent enzymes, thereby converting the octanoylated domains into lipoylated derivatives. The chain is Lipoyl synthase from Mannheimia succiniciproducens (strain KCTC 0769BP / MBEL55E).